Consider the following 210-residue polypeptide: MGQVFLLMPVLLASCFLSQGAAIENQRLFNIAVSRVQHLHLLAQKMFNDFDGTLLPDERRQLNKIFLLDFCISDSIVSPVDKHETQKSSVLKLLHISFRLIESWEYPSQTLIISNSLMVRNANQISEKLSDLKVGINLLITGSQDGVLSLDDNDSQHLPPYGNYYQNLGGEGNVRRNYELLACFKKDMHKVETYLTVAKCRKSLEANCTL.

A signal peptide spans 1–22 (MGQVFLLMPVLLASCFLSQGAA). Histidine 38 contacts Zn(2+). A disulfide bridge connects residues cysteine 71 and cysteine 183. Glutamate 192 provides a ligand contact to Zn(2+). A disulfide bridge connects residues cysteine 200 and cysteine 208.

The protein belongs to the somatotropin/prolactin family.

It is found in the secreted. Growth hormone plays an important role in growth control and is involved in the regulation of several anabolic processes. Implicated as an osmoregulatory substance important for seawater adaptation. The polypeptide is Somatotropin-1 (gh1) (Oncorhynchus nerka (Sockeye salmon)).